The chain runs to 151 residues: 3-hydroxyacyl-[acyl-carrier-protein] dehydratase FabZ (151 aa).

Residue H52 is part of the active site.

This sequence belongs to the thioester dehydratase family. FabZ subfamily.

The protein resides in the cytoplasm. The enzyme catalyses a (3R)-hydroxyacyl-[ACP] = a (2E)-enoyl-[ACP] + H2O. Its function is as follows. Involved in unsaturated fatty acids biosynthesis. Catalyzes the dehydration of short chain beta-hydroxyacyl-ACPs and long chain saturated and unsaturated beta-hydroxyacyl-ACPs. This is 3-hydroxyacyl-[acyl-carrier-protein] dehydratase FabZ (fabZ1) from Lactococcus lactis subsp. lactis (strain IL1403) (Streptococcus lactis).